The following is a 566-amino-acid chain: Proline--tRNA ligase (566 aa).

The protein belongs to the class-II aminoacyl-tRNA synthetase family. ProS type 1 subfamily. As to quaternary structure, homodimer.

The protein resides in the cytoplasm. It carries out the reaction tRNA(Pro) + L-proline + ATP = L-prolyl-tRNA(Pro) + AMP + diphosphate. Functionally, catalyzes the attachment of proline to tRNA(Pro) in a two-step reaction: proline is first activated by ATP to form Pro-AMP and then transferred to the acceptor end of tRNA(Pro). As ProRS can inadvertently accommodate and process non-cognate amino acids such as alanine and cysteine, to avoid such errors it has two additional distinct editing activities against alanine. One activity is designated as 'pretransfer' editing and involves the tRNA(Pro)-independent hydrolysis of activated Ala-AMP. The other activity is designated 'posttransfer' editing and involves deacylation of mischarged Ala-tRNA(Pro). The misacylated Cys-tRNA(Pro) is not edited by ProRS. The sequence is that of Proline--tRNA ligase from Coxiella burnetii (strain RSA 493 / Nine Mile phase I).